Reading from the N-terminus, the 253-residue chain is Nurim homolog (253 aa).

Residues 1 to 2 (MA) lie on the Nuclear side of the membrane. The chain crosses the membrane as a helical span at residues 3–30 (TFAKVMLLLSSVATFGYTFFVVGKLMLF). At 31–56 (LSTPRSISKAHTWIFNLLDNKSRLET) the chain is on the perinuclear space side. Residues 57–78 (AYGPIVFDTLYLIGFIFQHSFL) form a helical membrane-spanning segment. Residues 79–96 (KSALVKNLWRKLGLAAAE) lie on the Nuclear side of the membrane. The helical transmembrane segment at 97–113 (RTIYSLTSSICLHYLLK) threads the bilayer. The Perinuclear space segment spans residues 114 to 132 (NWLPAQSIVLWQVDVDESA). The chain crosses the membrane as a helical span at residues 133–161 (PLWWTFVVTHGLGWAVIFGGSLIMDLPEL). At 162 to 188 (LGVKQVYYDLKEYGEPVAYKSSELRNL) the chain is on the nuclear side. A helical membrane pass occupies residues 189–207 (YSHVRHPSFVGLSVILFAT). At 208 to 213 (NVMSLD) the chain is on the perinuclear space side. A helical membrane pass occupies residues 214 to 231 (RLLLASLLTVYMYVAWST). The Nuclear portion of the chain corresponds to 232–253 (DDKDVAYQKQQLRNKKHELKAQ).

Belongs to the nurim family.

Its subcellular location is the nucleus inner membrane. This Drosophila pseudoobscura pseudoobscura (Fruit fly) protein is Nurim homolog (nrm).